The primary structure comprises 82 residues: Putative membrane protein insertion efficiency factor (82 aa).

This sequence belongs to the UPF0161 family.

The protein resides in the cell inner membrane. Functionally, could be involved in insertion of integral membrane proteins into the membrane. The protein is Putative membrane protein insertion efficiency factor of Rickettsia felis (strain ATCC VR-1525 / URRWXCal2) (Rickettsia azadi).